The following is a 721-amino-acid chain: Mitogen-activated protein kinase 6 (721 aa).

The Protein kinase domain maps to 20–316; sequence YMDLKPLGCG…AEEALSHPYM (297 aa). Residues 26-34 and Lys49 contribute to the ATP site; that span reads LGCGGNGLV. Asp152 (proton acceptor) is an active-site residue. A Phosphothreonine modification is found at Thr626. A TXY motif is present at residues 626 to 628; it reads TSY. Phosphotyrosine is present on Tyr628.

This sequence belongs to the protein kinase superfamily. CMGC Ser/Thr protein kinase family. MAP kinase subfamily. Mg(2+) serves as cofactor. Post-translationally, dually phosphorylated on Thr-626 and Tyr-628, which activates the enzyme.

It carries out the reaction L-seryl-[protein] + ATP = O-phospho-L-seryl-[protein] + ADP + H(+). The enzyme catalyses L-threonyl-[protein] + ATP = O-phospho-L-threonyl-[protein] + ADP + H(+). Activated by threonine and tyrosine phosphorylation. Phosphorylates microtubule-associated protein 2 (MAP2). May promote entry in the cell cycle. The sequence is that of Mitogen-activated protein kinase 6 (MAPK6) from Gallus gallus (Chicken).